Reading from the N-terminus, the 562-residue chain is Phosphoenolpyruvate carboxykinase (ATP) (562 aa).

G265–T272 is a binding site for ATP.

This sequence belongs to the phosphoenolpyruvate carboxykinase (ATP) family.

The enzyme catalyses oxaloacetate + ATP = phosphoenolpyruvate + ADP + CO2. It participates in carbohydrate biosynthesis; gluconeogenesis. The sequence is that of Phosphoenolpyruvate carboxykinase (ATP) (pckA) from Dictyostelium discoideum (Social amoeba).